The chain runs to 397 residues: Acetate kinase 2 (397 aa).

Mg(2+) is bound at residue asparagine 10. ATP is bound at residue lysine 17. Arginine 90 provides a ligand contact to substrate. Catalysis depends on aspartate 147, which acts as the Proton donor/acceptor. ATP is bound by residues 207 to 211 (HLGNG), 281 to 283 (DAR), and 329 to 333 (GIGEN). Glutamate 385 lines the Mg(2+) pocket.

It belongs to the acetokinase family. Homodimer. Mg(2+) serves as cofactor. Requires Mn(2+) as cofactor.

It is found in the cytoplasm. The enzyme catalyses acetate + ATP = acetyl phosphate + ADP. The protein operates within metabolic intermediate biosynthesis; acetyl-CoA biosynthesis; acetyl-CoA from acetate: step 1/2. Its function is as follows. Catalyzes the formation of acetyl phosphate from acetate and ATP. Can also catalyze the reverse reaction. The polypeptide is Acetate kinase 2 (Vibrio parahaemolyticus serotype O3:K6 (strain RIMD 2210633)).